A 65-amino-acid polypeptide reads, in one-letter code: Conotoxin Cal1.3 (65 aa).

The signal sequence occupies residues 1–18 (MRCLPVFIILLLLASTAA). Residues 19–49 (VDVAGSKLKRRLERKPYQGSQAYVKKTAFGL) constitute a propeptide that is removed on maturation. Cystine bridges form between Cys-52–Cys-62 and Cys-53–Cys-59. The residue at position 61 (Pro-61) is a 4-hydroxyproline. Cys-62 is modified (cysteine amide).

It belongs to the conotoxin T superfamily. As to expression, expressed by the venom duct.

The protein localises to the secreted. In terms of biological role, probable neurotoxin with unknown target. Possibly targets ion channels. This Californiconus californicus (California cone) protein is Conotoxin Cal1.3.